The following is a 71-amino-acid chain: Large ribosomal subunit protein bL31 (71 aa).

The protein belongs to the bacterial ribosomal protein bL31 family. Type A subfamily. Part of the 50S ribosomal subunit.

In terms of biological role, binds the 23S rRNA. The protein is Large ribosomal subunit protein bL31 (rpmE) of Mycoplasmopsis synoviae (strain 53) (Mycoplasma synoviae).